The primary structure comprises 498 residues: N-acyl-D-aspartate deacylase (498 aa).

A disordered region spans residues 478–498 (AERPGQVLAPGDAIPWSQQSE).

It belongs to the metallo-dependent hydrolases superfamily. N-acyl-D-amino-acid deacylase family. Zn(2+) serves as cofactor.

Its subcellular location is the cytoplasm. It catalyses the reaction an N-acyl-D-aspartate + H2O = D-aspartate + a carboxylate. The protein is N-acyl-D-aspartate deacylase of Alcaligenes xylosoxydans xylosoxydans (Achromobacter xylosoxidans).